A 258-amino-acid chain; its full sequence is 5'-nucleotidase SurE (258 aa).

Residues D14, D15, S45, and N101 each coordinate a divalent metal cation.

It belongs to the SurE nucleotidase family. A divalent metal cation is required as a cofactor.

It is found in the cytoplasm. It carries out the reaction a ribonucleoside 5'-phosphate + H2O = a ribonucleoside + phosphate. Nucleotidase that shows phosphatase activity on nucleoside 5'-monophosphates. In Chlorobium limicola (strain DSM 245 / NBRC 103803 / 6330), this protein is 5'-nucleotidase SurE.